A 533-amino-acid polypeptide reads, in one-letter code: Lysophosphatidylcholine acyltransferase (533 aa).

At 1–79 the chain is on the cytoplasmic side; sequence MTTSTIKPTG…VLTVLLLPIR (79 aa). The helical; Signal-anchor for type II membrane protein transmembrane segment at 80-100 threads the bilayer; the sequence is VVGCVLSLISAWMFACIGLYG. The Lumenal segment spans residues 101–533; the sequence is MTLDDLKAKP…PKAVVTTAEN (433 aa). The HXXXXD motif motif lies at 158–163; sequence HSSYVD. 3 EF-hand domains span residues 402–437, 439–474, and 475–510; these read LKNTDLHKLFALLDHRRSGTVSLKSFLLCSLFCKLK, SDLLTFLRALIHLYSESSQQIDRESFVRLMRHAGGK, and LNEQKAQALFYALDTDNLGYVSFDSFVELTEKQKSS.

It belongs to the 1-acyl-sn-glycerol-3-phosphate acyltransferase family.

The protein resides in the endoplasmic reticulum membrane. It is found in the golgi apparatus membrane. The protein localises to the lipid droplet. The catalysed reaction is a 1-acyl-sn-glycero-3-phosphocholine + an acyl-CoA = a 1,2-diacyl-sn-glycero-3-phosphocholine + CoA. Its pathway is lipid metabolism; phospholipid metabolism. Functionally, acetyltransferase which mediates the conversion of 1-acyl-sn-glycero-3-phosphocholine (LPC) into phosphatidylcholine (PC). Has a calcium-independent activity. Displays a clear preference for saturated fatty acyl-CoAs, and 1-myristoyl or 1-palmitoyl LPC as acyl donors and acceptors, respectively. Involved in the regulation of lipid droplet number and size. This Drosophila melanogaster (Fruit fly) protein is Lysophosphatidylcholine acyltransferase.